A 1207-amino-acid polypeptide reads, in one-letter code: DNA-directed RNA polymerase subunit beta' (1207 aa).

Residues cysteine 60, cysteine 62, cysteine 75, and cysteine 78 each contribute to the Zn(2+) site. Positions 450, 452, and 454 each coordinate Mg(2+). The Zn(2+) site is built by cysteine 818, cysteine 892, cysteine 899, and cysteine 902.

This sequence belongs to the RNA polymerase beta' chain family. As to quaternary structure, the RNAP catalytic core consists of 2 alpha, 1 beta, 1 beta' and 1 omega subunit. When a sigma factor is associated with the core the holoenzyme is formed, which can initiate transcription. Mg(2+) serves as cofactor. Requires Zn(2+) as cofactor.

It carries out the reaction RNA(n) + a ribonucleoside 5'-triphosphate = RNA(n+1) + diphosphate. In terms of biological role, DNA-dependent RNA polymerase catalyzes the transcription of DNA into RNA using the four ribonucleoside triphosphates as substrates. This chain is DNA-directed RNA polymerase subunit beta', found in Lactococcus lactis subsp. lactis (strain IL1403) (Streptococcus lactis).